The following is a 248-amino-acid chain: Anamorsin homolog (248 aa).

Positions 4–129 (FKGLQKTLYI…ETGSSARLSF (126 aa)) are N-terminal SAM-like domain. The linker stretch occupies residues 130–161 (AKKDASALNVWKISGDDEELIDEEDLLDEEDK). Residues Cys-172, Cys-181, Cys-184, and Cys-186 each contribute to the [2Fe-2S] cluster site. A fe-S binding site A region spans residues 172–186 (CSTTGKRKACKNCSC). [4Fe-4S] cluster-binding residues include Cys-209, Cys-212, Cys-220, and Cys-223. 2 short sequence motifs (cx2C motif) span residues 209-212 (CGNC) and 220-223 (CSTC). A fe-S binding site B region spans residues 209 to 223 (CGNCYLGDAFRCSTC).

Belongs to the anamorsin family. As to quaternary structure, monomer. Requires [2Fe-2S] cluster as cofactor. The cofactor is [4Fe-4S] cluster.

Its subcellular location is the cytoplasm. It localises to the mitochondrion intermembrane space. Functionally, component of the cytosolic iron-sulfur (Fe-S) protein assembly (CIA) machinery. Required for the maturation of extramitochondrial Fe-S proteins. Part of an electron transfer chain functioning in an early step of cytosolic Fe-S biogenesis, facilitating the de novo assembly of a [4Fe-4S] cluster on the cytosolic Fe-S scaffold complex. Electrons are transferred from NADPH via a FAD- and FMN-containing diflavin oxidoreductase. Together with the diflavin oxidoreductase, also required for the assembly of the diferric tyrosyl radical cofactor of ribonucleotide reductase (RNR), probably by providing electrons for reduction during radical cofactor maturation in the catalytic small subunit. The sequence is that of Anamorsin homolog from Drosophila ananassae (Fruit fly).